The chain runs to 43 residues: Putative inhibitor of glucose uptake transporter SgrT (43 aa).

Functionally, acts to promote recovery from glucose-phosphate stress due to intracellular accumulation of glucose-6-phosphate caused by disruption of glycolytic flux or in the presence of (toxic) non-metabolizable glucose phosphate analogs. It may do so by inhibiting the transporter activity for glucose uptake (PtsG) as cells that overexpress this protein do not seem to import glucose although they have nearly wild-type levels of PtsG. This Escherichia coli (strain K12) protein is Putative inhibitor of glucose uptake transporter SgrT (sgrT).